The chain runs to 130 residues: Small ribosomal subunit protein uS8 (130 aa).

The protein belongs to the universal ribosomal protein uS8 family.

This Candida glabrata (strain ATCC 2001 / BCRC 20586 / JCM 3761 / NBRC 0622 / NRRL Y-65 / CBS 138) (Yeast) protein is Small ribosomal subunit protein uS8 (RPS22).